Here is a 268-residue protein sequence, read N- to C-terminus: Undecaprenyl-diphosphatase (268 aa).

8 helical membrane passes run 4–24 (STTLVALVLGLLEGLTEFIPV), 50–70 (IQLGAVLAVLTVYASKLISVI), 84–104 (AAVLLAFLPAVVVGVMAHGFI), 109–129 (FETPILIAIMLILGGIILLFV), 144–164 (VPLGVALKIGFFQCLAMVPGV), 184–204 (AAEFSFFLSMPTMAGAFAFDL), 214–234 (GALGEIAVGFVAAFLAAVLVV), and 245–265 (GYSLFGWWRIIVGSIALAALL).

Belongs to the UppP family.

The protein localises to the cell inner membrane. The catalysed reaction is di-trans,octa-cis-undecaprenyl diphosphate + H2O = di-trans,octa-cis-undecaprenyl phosphate + phosphate + H(+). In terms of biological role, catalyzes the dephosphorylation of undecaprenyl diphosphate (UPP). Confers resistance to bacitracin. This is Undecaprenyl-diphosphatase from Cereibacter sphaeroides (strain ATCC 17025 / ATH 2.4.3) (Rhodobacter sphaeroides).